Reading from the N-terminus, the 355-residue chain is Diacylglycerol O-acyltransferase 2A (355 aa).

2 helical membrane-spanning segments follow: residues 41-61 (LLWC…CSIP) and 62-78 (VLLW…ILVW). N-linked (GlcNAc...) asparagine glycosylation occurs at N142.

This sequence belongs to the diacylglycerol acyltransferase family.

The protein resides in the endoplasmic reticulum membrane. The enzyme catalyses an acyl-CoA + a 1,2-diacyl-sn-glycerol = a triacyl-sn-glycerol + CoA. Its pathway is glycerolipid metabolism; triacylglycerol biosynthesis. Catalyzes the terminal and only committed step in triacylglycerol synthesis by using diacylglycerol and fatty acyl CoA as substrates. Required for storage lipid synthesis. In Umbelopsis ramanniana (Oleaginous fungus), this protein is Diacylglycerol O-acyltransferase 2A (DGAT2A).